The following is a 681-amino-acid chain: T-box-containing protein 2 (681 aa).

A DNA-binding region (T-box) is located at residues 149–323; sequence LWDQFSRAGT…NNPFAKGFRE (175 aa). 4 disordered regions span residues 316–351, 456–489, 521–558, and 589–611; these read PFAK…EQRR, GITS…NQSN, PNIN…LIPG, and ESGE…CQSG. Residues 470-489 are compositionally biased toward low complexity; sequence NSFTYYNSSSPSSSDSNQSN. Residues 521-534 show a composition bias toward polar residues; sequence PNINIPNTVETNVH.

As to quaternary structure, monomer. Differentiating muscle and tailbud tip.

The protein resides in the nucleus. In terms of biological role, involved in the transcriptional regulation of genes required for muscle differentiation. Binds to a palindromic site (called T site) and activates gene transcription when bound to such a site. In Halocynthia roretzi (Sea squirt), this protein is T-box-containing protein 2 (T2).